The primary structure comprises 360 residues: tRNA N6-adenosine threonylcarbamoyltransferase (360 aa).

Residues H111 and H115 each coordinate Fe cation. Substrate is bound by residues L134–G138, D167, G180, D184, and N279. Fe cation is bound at residue D307.

Belongs to the KAE1 / TsaD family. The cofactor is Fe(2+).

Its subcellular location is the cytoplasm. It catalyses the reaction L-threonylcarbamoyladenylate + adenosine(37) in tRNA = N(6)-L-threonylcarbamoyladenosine(37) in tRNA + AMP + H(+). Its function is as follows. Required for the formation of a threonylcarbamoyl group on adenosine at position 37 (t(6)A37) in tRNAs that read codons beginning with adenine. Is involved in the transfer of the threonylcarbamoyl moiety of threonylcarbamoyl-AMP (TC-AMP) to the N6 group of A37, together with TsaE and TsaB. TsaD likely plays a direct catalytic role in this reaction. In Acaryochloris marina (strain MBIC 11017), this protein is tRNA N6-adenosine threonylcarbamoyltransferase.